The chain runs to 376 residues: Succinyl-diaminopimelate desuccinylase (376 aa).

His67 is a binding site for Zn(2+). Asp69 is an active-site residue. Position 100 (Asp100) interacts with Zn(2+). Glu134 acts as the Proton acceptor in catalysis. Zn(2+)-binding residues include Glu135, Glu163, and His349.

This sequence belongs to the peptidase M20A family. DapE subfamily. In terms of assembly, homodimer. Zn(2+) serves as cofactor. The cofactor is Co(2+).

It carries out the reaction N-succinyl-(2S,6S)-2,6-diaminopimelate + H2O = (2S,6S)-2,6-diaminopimelate + succinate. It participates in amino-acid biosynthesis; L-lysine biosynthesis via DAP pathway; LL-2,6-diaminopimelate from (S)-tetrahydrodipicolinate (succinylase route): step 3/3. Catalyzes the hydrolysis of N-succinyl-L,L-diaminopimelic acid (SDAP), forming succinate and LL-2,6-diaminopimelate (DAP), an intermediate involved in the bacterial biosynthesis of lysine and meso-diaminopimelic acid, an essential component of bacterial cell walls. This is Succinyl-diaminopimelate desuccinylase from Shewanella sediminis (strain HAW-EB3).